The primary structure comprises 128 residues: Adrenodoxin homolog (128 aa).

Positions 12 to 115 constitute a 2Fe-2S ferredoxin-type domain; sequence EQIRIFFKTM…NAVFTVPRAT (104 aa). Cysteine 50, cysteine 56, cysteine 59, and cysteine 96 together coordinate [2Fe-2S] cluster.

It belongs to the adrenodoxin/putidaredoxin family. Requires [2Fe-2S] cluster as cofactor.

It is found in the mitosome. Ferredoxins are iron-sulfur proteins that transfer electrons in a wide variety of metabolic reactions. The sequence is that of Adrenodoxin homolog from Encephalitozoon cuniculi (strain GB-M1) (Microsporidian parasite).